The following is a 54-amino-acid chain: Pars intercerebralis major peptide D1 (54 aa).

Belongs to the granulin family. Post-translationally, six disulfide bonds are present. As to expression, brain.

Its subcellular location is the secreted. The chain is Pars intercerebralis major peptide D1 from Locusta migratoria (Migratory locust).